The primary structure comprises 210 residues: 3-hexulose-6-phosphate synthase (210 aa).

Belongs to the HPS/KGPDC family. HPS subfamily.

It carries out the reaction D-ribulose 5-phosphate + formaldehyde = D-arabino-hex-3-ulose 6-phosphate. It participates in one-carbon metabolism; formaldehyde assimilation via RuMP pathway; D-fructose 6-phosphate from D-ribulose 5-phosphate and formaldehyde: step 1/2. Its function is as follows. Catalyzes the condensation of ribulose 5-phosphate with formaldehyde to form 3-hexulose 6-phosphate. The polypeptide is 3-hexulose-6-phosphate synthase (Staphylococcus aureus (strain bovine RF122 / ET3-1)).